The primary structure comprises 246 residues: DNA polymerase sliding clamp (246 aa).

Belongs to the PCNA family. In terms of assembly, homotrimer. The subunits circularize to form a toroid; DNA passes through its center. Replication factor C (RFC) is required to load the toroid on the DNA.

In terms of biological role, sliding clamp subunit that acts as a moving platform for DNA processing. Responsible for tethering the catalytic subunit of DNA polymerase and other proteins to DNA during high-speed replication. The polypeptide is DNA polymerase sliding clamp (Methanocella arvoryzae (strain DSM 22066 / NBRC 105507 / MRE50)).